A 359-amino-acid polypeptide reads, in one-letter code: Phosphoserine aminotransferase (359 aa).

Residue Arg-41 participates in L-glutamate binding. Pyridoxal 5'-phosphate contacts are provided by residues 75–76, Trp-99, Thr-147, Asp-166, and Gln-189; that span reads AS. Lys-190 is subject to N6-(pyridoxal phosphate)lysine. 231–232 provides a ligand contact to pyridoxal 5'-phosphate; the sequence is NT.

The protein belongs to the class-V pyridoxal-phosphate-dependent aminotransferase family. SerC subfamily. In terms of assembly, homodimer. The cofactor is pyridoxal 5'-phosphate.

It is found in the cytoplasm. The catalysed reaction is O-phospho-L-serine + 2-oxoglutarate = 3-phosphooxypyruvate + L-glutamate. It catalyses the reaction 4-(phosphooxy)-L-threonine + 2-oxoglutarate = (R)-3-hydroxy-2-oxo-4-phosphooxybutanoate + L-glutamate. It functions in the pathway amino-acid biosynthesis; L-serine biosynthesis; L-serine from 3-phospho-D-glycerate: step 2/3. It participates in cofactor biosynthesis; pyridoxine 5'-phosphate biosynthesis; pyridoxine 5'-phosphate from D-erythrose 4-phosphate: step 3/5. Catalyzes the reversible conversion of 3-phosphohydroxypyruvate to phosphoserine and of 3-hydroxy-2-oxo-4-phosphonooxybutanoate to phosphohydroxythreonine. This is Phosphoserine aminotransferase from Azobacteroides pseudotrichonymphae genomovar. CFP2.